Here is a 412-residue protein sequence, read N- to C-terminus: Inactive serine protease 35 (412 aa).

The first 23 residues, 1-23 (MGAMFFGLMLFTLGWTLIDGSES), serve as a signal peptide directing secretion. N-linked (GlcNAc...) asparagine glycosylation occurs at Asn110. The Peptidase S1 domain occupies 124-407 (VYGTDSRFSI…ICLWMHGDDA (284 aa)). A disulfide bridge links Cys154 with Cys170. A compositionally biased stretch (basic residues) spans 192–207 (RNKGGGKRRRGSRRNR). The interval 192–246 (RNKGGGKRRRGSRRNRREVSGAGREGSQDSLKETAKAGRRRKGSARRQRAADGRP) is disordered. Over residues 217–227 (GSQDSLKETAK) the composition is skewed to basic and acidic residues. The segment covering 228–239 (AGRRRKGSARRQ) has biased composition (basic residues).

Belongs to the peptidase S1 family.

It is found in the secreted. The sequence is that of Inactive serine protease 35 (PRSS35) from Bos taurus (Bovine).